Here is a 107-residue protein sequence, read N- to C-terminus: Iron-sulfur cluster assembly protein CyaY (107 aa).

It belongs to the frataxin family.

Involved in iron-sulfur (Fe-S) cluster assembly. May act as a regulator of Fe-S biogenesis. This is Iron-sulfur cluster assembly protein CyaY from Edwardsiella ictaluri (strain 93-146).